A 273-amino-acid chain; its full sequence is tRNA (guanine-N(7)-)-methyltransferase (273 aa).

S-adenosyl-L-methionine contacts are provided by glycine 86, glutamate 109, arginine 111, asparagine 142, alanine 143, and leucine 162. Aspartate 165 is a catalytic residue. An alphaC helix region spans residues proline 166 to lysine 174. Residues threonine 240 and glutamate 242 each contribute to the S-adenosyl-L-methionine site. Residues threonine 240–arginine 248 form an alpha6 helix region.

It belongs to the class I-like SAM-binding methyltransferase superfamily. TrmB family. Catalytic component of the METTL1-WDR4 complex, composed of mettl1 and wdr4.

The protein resides in the nucleus. It catalyses the reaction guanosine(46) in tRNA + S-adenosyl-L-methionine = N(7)-methylguanosine(46) in tRNA + S-adenosyl-L-homocysteine. The catalysed reaction is a guanosine in mRNA + S-adenosyl-L-methionine = an N(7)-methylguanosine in mRNA + S-adenosyl-L-homocysteine. It carries out the reaction a guanosine in miRNA + S-adenosyl-L-methionine = an N(7)-methylguanosine in miRNA + S-adenosyl-L-homocysteine. Its pathway is tRNA modification; N(7)-methylguanine-tRNA biosynthesis. Functionally, catalytic component of METTL1-WDR4 methyltransferase complex that mediates the formation of N(7)-methylguanine in a subset of RNA species, such as tRNAs, mRNAs and microRNAs (miRNAs). Catalyzes the formation of N(7)-methylguanine at position 46 (m7G46) in a large subset of tRNAs that contain the 5'-RAGGU-3' motif within the variable loop. M7G46 interacts with C13-G22 in the D-loop to stabilize tRNA tertiary structure and protect tRNAs from decay. Also acts as a methyltransferase for a subset of internal N(7)-methylguanine in mRNAs. Internal N(7)-methylguanine methylation of mRNAs in response to stress promotes their relocalization to stress granules, thereby suppressing their translation. Also methylates a specific subset of miRNAs. The chain is tRNA (guanine-N(7)-)-methyltransferase (mettl1) from Xenopus laevis (African clawed frog).